Reading from the N-terminus, the 645-residue chain is Threonine--tRNA ligase (645 aa).

Residues 1 to 63 (MEQINIQFPD…ETDGSIEIVT (63 aa)) form the TGS domain. Residues 242–540 (DHRKIGKELE…LTEETKGAFP (299 aa)) form a catalytic region. 3 residues coordinate Zn(2+): cysteine 336, histidine 387, and histidine 517.

Belongs to the class-II aminoacyl-tRNA synthetase family. Homodimer. Zn(2+) serves as cofactor.

Its subcellular location is the cytoplasm. It catalyses the reaction tRNA(Thr) + L-threonine + ATP = L-threonyl-tRNA(Thr) + AMP + diphosphate + H(+). Its function is as follows. Catalyzes the attachment of threonine to tRNA(Thr) in a two-step reaction: L-threonine is first activated by ATP to form Thr-AMP and then transferred to the acceptor end of tRNA(Thr). Also edits incorrectly charged L-seryl-tRNA(Thr). In Staphylococcus aureus (strain NCTC 8325 / PS 47), this protein is Threonine--tRNA ligase.